Consider the following 492-residue polypeptide: Catalase (492 aa).

Active-site residues include His-65 and Asn-138. Residue Tyr-348 coordinates heme.

This sequence belongs to the catalase family. Homotetramer. Heme is required as a cofactor.

Its subcellular location is the cytoplasm. It localises to the cytosol. The protein resides in the peroxisome matrix. The catalysed reaction is 2 H2O2 = O2 + 2 H2O. In terms of biological role, catalyzes the degradation of hydrogen peroxide (H(2)O(2)) generated by peroxisomal oxidases to water and oxygen, thereby protecting cells from the toxic effects of hydrogen peroxide. This Helianthus annuus (Common sunflower) protein is Catalase.